The following is a 369-amino-acid chain: Phospho-N-acetylmuramoyl-pentapeptide-transferase (369 aa).

A run of 10 helical transmembrane segments spans residues 3–23 (ALLF…PLFI), 53–73 (GGIV…LLTW), 81–101 (VTPS…VGFL), 118–138 (WQKI…AITL), 162–182 (FMAL…CLIV), 198–218 (LAAG…FWQF), 240–260 (PLDL…FLWW), 267–287 (IFMG…LAIL), 290–310 (TELL…SVVL), and 347–367 (FWII…LEWI).

This sequence belongs to the glycosyltransferase 4 family. MraY subfamily. Requires Mg(2+) as cofactor.

Its subcellular location is the cell membrane. The enzyme catalyses UDP-N-acetyl-alpha-D-muramoyl-L-alanyl-gamma-D-glutamyl-meso-2,6-diaminopimeloyl-D-alanyl-D-alanine + di-trans,octa-cis-undecaprenyl phosphate = di-trans,octa-cis-undecaprenyl diphospho-N-acetyl-alpha-D-muramoyl-L-alanyl-D-glutamyl-meso-2,6-diaminopimeloyl-D-alanyl-D-alanine + UMP. The protein operates within cell wall biogenesis; peptidoglycan biosynthesis. Functionally, catalyzes the initial step of the lipid cycle reactions in the biosynthesis of the cell wall peptidoglycan: transfers peptidoglycan precursor phospho-MurNAc-pentapeptide from UDP-MurNAc-pentapeptide onto the lipid carrier undecaprenyl phosphate, yielding undecaprenyl-pyrophosphoryl-MurNAc-pentapeptide, known as lipid I. In Clavibacter michiganensis subsp. michiganensis (strain NCPPB 382), this protein is Phospho-N-acetylmuramoyl-pentapeptide-transferase.